The sequence spans 1915 residues: METQPASVPCVLPQDVYEFSEDRESLGRLRVSEMPSELNGGGDGSKGDGAAVVATEVSQQSNKKRKRCGVCVPCLRKEPCGTCYNCVNRSTSHQICKMRKCEQLKKKRVVPMKGVEAVDKDDAKNQAKEQVPSVKNCSESILVDGPKTDQMEAGPVNHVQEGRLKQECDSTLPSKGSEDLANQLLMEANSWLSNTAAPQDPCNKLNWDKPIIPNHIAANNNSNLEDAKNLVAFSAVAEAMSNYGMPASGTPSSISMQLYEKFNYETNQDNSGHSEGNAPSCPEDLNTLKEALALAKHGVKPPNCNCDGPECPDYLEWLENKIKSTGKGSQESPFPSLGQVSKKLVQKSYHKEQVLNLENTNVTCPSGNLPFSQNALSLAKEKNISLQTAIAIEALTQLSSALPQTNNEYPNAPSQPLINHNDQLTHFPTAKGNQLPMLPLSCNELFQNQQAQLYTGKNALPVPQSPRQASWEQNKKPGYQESEYIPENLSQSSSVLPSDASTPQKKEFLQQWVQNADLLKSPSDPMTGLKQLLGNTDEYIKSAFKGPEGLSKKIKNVKSKHTIKSIKKESADFTKMSPDQQLSQLLQGNDFHRNTQAALQQHLHHKRNLFVDSNTMEACTQEQQNWWVPNSQQAPVSKTTEKPVKERKKRRQSPSQKQVEPKPKPPRKQVQIKKPRVKEGNAVFMPVSQISLDSFRRVEKEENQVKELDLENSLPINVQPDLLGSQSIQLTGSQANLENQKTVNTQETCNENQTSIGKANNFALCVNKTNSLVAKGRCPTPSTGDSSSGQGDSANQHTNLTDVPGQNDLSCIDDKFEDLIKQFAAEFGEDFSLPGSEVPSQNGERPPKQQTSGVPQFKMPFPSQLPSENATHSNPALSNNLLTHNASHKFDSLFSSKSPKQIKIESSGAITVVSTTCSYSEENQHLDGTPTKSELPFNPTLSGFLESPLKYLTSPTKSLIDTPAKMAQAEFPTCDCVEQINEKDEGPYYTHLGSGPTVASIRELMEERFGEKGEAIRIEKVIYTGKEGKSSRGCPIAKWVIRRQSEDEKLMCLVRQRAGHHCENAVIIILIMAWEGIPRALGDSLYDDISGTITKYGNPTSRRCGLNDDRTCACQGKDPNTCGASFSFGCSWSMYFNGCKYARSKTPRKFRLIGDNPKEEEFLKDSFQDLATKVAPVYKMLAPQAYQNQANNEDVAIDCRLGLEEGRPFSGVTACMDFCAHAHKDQHNLYNGCTVVCTLTKEDNRMIGKIAEDEQLHVLPLYKVSTTDEFGSEERQLEKIRKGGIQVLSSFPREVRKLSEPAKSCRQRQLDAKKATAEKKKLQKEKLVSPDKTKQEPSDTKTCQQNPGVPQQQTKPCVKVEPSNHYNTFKYNGNGVVESYSVLGSCRPSDPYSMNSVYSYHSFYAQPNLPSVNGFHSKFALPPFGFYSFPNNPVVPNQFMNYGTGDARNSGWMNNSFEKKPELQSLADGMNQSYGSELPEQNYRRSSEVPHHYSLQNSNSQKSVGVPHRTTPAPMETTPYSNVPCYNKVIKKEPVCDPLVDPFQRSNSVHSQSPGVNHSLQTNDLSYKANGALPSSGRTNKEGPCSMFLPSDKNGLEKRDYFGVHSNVPGLKEKQWTPYGIDVPVGQRDSLDSQCSGKVWSSCKLSDSPAVMPSTVQDKNWTGRQASLNQGVKEPMPFQEKLWNSVAASGRCSTTPNDRSSVTPCAELQDKNWMSFPNPAVNSLKTDSSQNHWDPYSLDDNMDDGQSKSVKEEEDEEEIWSDSEHNFLDGNIGGVAVAPGHGSILIECARRELHATTPLKKPNRCHPTRISLVFYQHKNLNQPNHGLALWEAKMKQLAERARVKEEEAAKLGIKQEVKSLGKKRKWGGAATTETPPVEKKDFIPTRQAATSLTDSTTTAFSYAYTKVTGPYSRFI.

The disordered stretch occupies residues 28–49; that stretch reads RLRVSEMPSELNGGGDGSKGDG. Residues 61–102 form a CXXC-type zinc finger; it reads SNKKRKRCGVCVPCLRKEPCGTCYNCVNRSTSHQICKMRKCE. Residues Cys68, Cys71, Cys74, Cys80, Cys83, Cys86, Cys96, and Cys101 each contribute to the Zn(2+) site. Positions 629–638 are enriched in polar residues; sequence PNSQQAPVSK. Disordered regions lie at residues 629–679, 776–806, and 831–880; these read PNSQ…RVKE, GRCP…VPGQ, and FSLP…LSNN. Basic residues predominate over residues 664–676; sequence KPPRKQVQIKKPR. The segment covering 779–793 has biased composition (low complexity); that stretch reads PTPSTGDSSSGQGDS. Polar residues-rich tracts occupy residues 838–854 and 864–880; these read VPSQ…TSGV and QLPS…LSNN. Residues Cys974, Cys976, Cys1034, His1060, and Cys1062 each coordinate Zn(2+). A 2-oxoglutarate-binding site is contributed by Arg1102. Residues Cys1112, Cys1114, Cys1130, Cys1139, and Cys1199 each contribute to the Zn(2+) site. Cys1215 is a 2-oxoglutarate binding site. Residue His1221 participates in Zn(2+) binding. Residues His1223 and Asp1225 each coordinate Fe cation. Residue His1257 participates in 2-oxoglutarate binding. 3 disordered regions span residues 1298–1356, 1469–1516, and 1719–1753; these read LSEP…QTKP, GMNQ…APME, and PAVN…VKEE. Positions 1308–1339 are enriched in basic and acidic residues; the sequence is RQLDAKKATAEKKKLQKEKLVSPDKTKQEPSD. The segment covering 1340–1355 has biased composition (polar residues); it reads TKTCQQNPGVPQQQTK. The span at 1482–1491 shows a compositional bias: basic and acidic residues; the sequence is NYRRSSEVPH. Polar residues-rich tracts occupy residues 1494–1503 and 1720–1732; these read SLQNSNSQKS and AVNS…SQNH. Residue His1794 coordinates Fe cation. 1809–1811 contacts 2-oxoglutarate; that stretch reads RIS. Residues 1827 to 1860 are a coiled coil; it reads LALWEAKMKQLAERARVKEEEAAKLGIKQEVKSL.

The protein belongs to the TET family. Fe(2+) serves as cofactor. The cofactor is Zn(2+). In terms of tissue distribution, detected in embryo (at protein level). Detected in embryonic head, in developing brain and eye.

The protein localises to the nucleus. It is found in the chromosome. It catalyses the reaction a 5-methyl-2'-deoxycytidine in DNA + 2-oxoglutarate + O2 = a 5-hydroxymethyl-2'-deoxycytidine in DNA + succinate + CO2. The enzyme catalyses a 5-hydroxymethyl-2'-deoxycytidine in DNA + 2-oxoglutarate + O2 = a 5-formyl-2'-deoxycytidine in DNA + succinate + CO2 + H2O. The catalysed reaction is a 5-formyl-2'-deoxycytidine in DNA + 2-oxoglutarate + O2 = a 5-carboxyl-2'-deoxycytidine in DNA + succinate + CO2 + H(+). In terms of biological role, dioxygenase that catalyzes the conversion of the modified genomic base 5-methylcytosine (5mC) into 5-hydroxymethylcytosine (5hmC) and plays a key role in epigenetic chromatin reprogramming during embryonic development. Conversion of 5mC into 5hmC probably constitutes the first step in cytosine demethylation. Selectively binds to the promoter region of target genes and contributes to regulate the expression of numerous developmental genes, including pax6, rax, sox9 and six3. May also contribute to the regulation of target genes in ways that do not require its enzyme activity. The protein is Methylcytosine dioxygenase tet3-B of Xenopus laevis (African clawed frog).